The following is a 432-amino-acid chain: Enolase (432 aa).

Residue Gln167 coordinates (2R)-2-phosphoglycerate. Glu209 (proton donor) is an active-site residue. Residues Asp246, Glu290, and Asp317 each contribute to the Mg(2+) site. (2R)-2-phosphoglycerate-binding residues include Lys342, Arg371, Ser372, and Lys393. The active-site Proton acceptor is the Lys342.

It belongs to the enolase family. As to quaternary structure, component of the RNA degradosome, a multiprotein complex involved in RNA processing and mRNA degradation. Mg(2+) serves as cofactor.

The protein resides in the cytoplasm. Its subcellular location is the secreted. The protein localises to the cell surface. It carries out the reaction (2R)-2-phosphoglycerate = phosphoenolpyruvate + H2O. Its pathway is carbohydrate degradation; glycolysis; pyruvate from D-glyceraldehyde 3-phosphate: step 4/5. In terms of biological role, catalyzes the reversible conversion of 2-phosphoglycerate (2-PG) into phosphoenolpyruvate (PEP). It is essential for the degradation of carbohydrates via glycolysis. In Klebsiella pneumoniae (strain 342), this protein is Enolase.